A 98-amino-acid chain; its full sequence is Small ribosomal subunit protein uS17B (98 aa).

The protein belongs to the universal ribosomal protein uS17 family. As to quaternary structure, part of the 30S ribosomal subunit.

One of the primary rRNA binding proteins, it binds specifically to the 5'-end of 16S ribosomal RNA. This is Small ribosomal subunit protein uS17B from Bacteroides thetaiotaomicron (strain ATCC 29148 / DSM 2079 / JCM 5827 / CCUG 10774 / NCTC 10582 / VPI-5482 / E50).